The following is a 157-amino-acid chain: Protein Smg homolog (157 aa).

It belongs to the Smg family.

This is Protein Smg homolog from Colwellia psychrerythraea (strain 34H / ATCC BAA-681) (Vibrio psychroerythus).